The sequence spans 449 residues: MHLSSRANAPAPHKPYNPFYLQLYFWVIIAIILGALLGHCYPVVGQQLKPLGDAFIKLVKMIISPVIFLTIVTGIASVAHVGTVARVFGKAMVYFLFFSTLALLLGLVVAHVVHPGVGMNINPADLHQGEIASYVEKSHDLTLVGFLMDIIPKTLLSPFVGDNILQVLFVAVLFGIALALAGERGKPVLNLLDALTLPVFKLVQMLMKMAPIGAFGAIAFTIGKYGVDSLVNLGWLVGSFYLTSLLFVLVILGAVSWFSGFSILKLIRYLKSELLLVLGTSSSEAALPSLMEKMVQAGCKKSVVGLVVPTGYSFNLDGTNIYMTLAALFIAQATNTELTPAHQLALFLVAMLSSKGAAGVSGAGFITLAATLTVVPEVPIAGMALILGVDRFMSECRSLTNFIGNAVATLVVSRWENALNHEQLKIALDGSEPAYQSLHAKDAEPSVSR.

8 helical membrane-spanning segments follow: residues 20–42, 62–84, 91–113, 164–181, 202–224, 239–261, 344–366, and 370–389; these read YLQL…HCYP, IISP…VGTV, AMVY…AHVV, ILQV…LALA, LVQM…TIGK, SFYL…FSGF, LALF…AGFI, and ATLT…ILGV.

It belongs to the dicarboxylate/amino acid:cation symporter (DAACS) (TC 2.A.23) family.

The protein resides in the cell inner membrane. Its function is as follows. Responsible for the transport of dicarboxylates such as succinate, fumarate, and malate from the periplasm across the inner membrane. This Xylella fastidiosa (strain 9a5c) protein is C4-dicarboxylate transport protein (dctA).